Consider the following 27-residue polypeptide: Truncated HBeAg protein (27 aa).

This is Truncated HBeAg protein (C) from Hepatitis B virus genotype C subtype ayw (isolate Australia/AustRC/1992) (HBV-C).